A 364-amino-acid polypeptide reads, in one-letter code: D-alanine--D-alanine ligase (364 aa).

One can recognise an ATP-grasp domain in the interval 134-347 (RRLACINGLK…YPDLLDELIN (214 aa)). 167–222 (ASEFGWPLFVKPCSLGSSVGIHKANNMDELNAAVADALRYDEEILVEEFIVGREIE) is an ATP binding site. Mg(2+) contacts are provided by aspartate 300, glutamate 314, and asparagine 316.

The protein belongs to the D-alanine--D-alanine ligase family. The cofactor is Mg(2+). Requires Mn(2+) as cofactor.

The protein localises to the cytoplasm. It carries out the reaction 2 D-alanine + ATP = D-alanyl-D-alanine + ADP + phosphate + H(+). It functions in the pathway cell wall biogenesis; peptidoglycan biosynthesis. Its function is as follows. Cell wall formation. The chain is D-alanine--D-alanine ligase from Legionella pneumophila (strain Lens).